Reading from the N-terminus, the 63-residue chain is Large ribosomal subunit protein uL29 (63 aa).

The protein belongs to the universal ribosomal protein uL29 family.

The polypeptide is Large ribosomal subunit protein uL29 (Haemophilus ducreyi (strain 35000HP / ATCC 700724)).